The chain runs to 225 residues: Glutathione s-transferase kappa 2 (225 aa).

Glutathione contacts are provided by residues 15–17 (SPY), asparagine 52, and 200–201 (SD).

This sequence belongs to the GST superfamily. Kappa family. In terms of tissue distribution, expressed in the pharynx, body wall muscles and epidermis. Weaker expression is seen in the intestine.

It localises to the mitochondrion. The enzyme catalyses RX + glutathione = an S-substituted glutathione + a halide anion + H(+). Has roles in respiratory and lipid metabolism. The protein is Glutathione s-transferase kappa 2 (gstk-2) of Caenorhabditis elegans.